The primary structure comprises 167 residues: Translation initiation factor IF-3 (167 aa).

This sequence belongs to the IF-3 family. In terms of assembly, monomer.

Its subcellular location is the cytoplasm. IF-3 binds to the 30S ribosomal subunit and shifts the equilibrium between 70S ribosomes and their 50S and 30S subunits in favor of the free subunits, thus enhancing the availability of 30S subunits on which protein synthesis initiation begins. In Bacillus cereus (strain ATCC 14579 / DSM 31 / CCUG 7414 / JCM 2152 / NBRC 15305 / NCIMB 9373 / NCTC 2599 / NRRL B-3711), this protein is Translation initiation factor IF-3.